The sequence spans 60 residues: Large ribosomal subunit protein bL32 (60 aa).

It belongs to the bacterial ribosomal protein bL32 family.

This Thermotoga maritima (strain ATCC 43589 / DSM 3109 / JCM 10099 / NBRC 100826 / MSB8) protein is Large ribosomal subunit protein bL32 (rpmF).